We begin with the raw amino-acid sequence, 587 residues long: Aspartate--tRNA ligase (587 aa).

Glu-173 is a binding site for L-aspartate. The segment at Gln-197–Lys-200 is aspartate. Arg-219 is a binding site for L-aspartate. ATP-binding positions include Arg-219–Glu-221 and Gln-228. His-446 is a binding site for L-aspartate. Glu-480 contacts ATP. Residue Arg-487 coordinates L-aspartate. Gly-532–Arg-535 lines the ATP pocket.

Belongs to the class-II aminoacyl-tRNA synthetase family. Type 1 subfamily. Homodimer.

It localises to the cytoplasm. It carries out the reaction tRNA(Asp) + L-aspartate + ATP = L-aspartyl-tRNA(Asp) + AMP + diphosphate. Functionally, catalyzes the attachment of L-aspartate to tRNA(Asp) in a two-step reaction: L-aspartate is first activated by ATP to form Asp-AMP and then transferred to the acceptor end of tRNA(Asp). The sequence is that of Aspartate--tRNA ligase from Phocaeicola vulgatus (strain ATCC 8482 / DSM 1447 / JCM 5826 / CCUG 4940 / NBRC 14291 / NCTC 11154) (Bacteroides vulgatus).